We begin with the raw amino-acid sequence, 101 residues long: MSAEKMTKLEENLQRAVALKKTVDRWRNFHIHCMWQTTLDQRRNLFAALRMKDTKEQELALSNKQLLVVRQAALHELFEKEYQQYQQELNQMGKAFYEERL.

In terms of assembly, microtubule inner protein component of sperm flagellar doublet microtubules.

The protein localises to the cytoplasm. The protein resides in the cytoskeleton. It is found in the cilium axoneme. Its subcellular location is the flagellum axoneme. Its function is as follows. Microtubule inner protein (MIP) part of the dynein-decorated doublet microtubules (DMTs) in cilia axoneme, which is required for motile cilia beating. This is Cilia- and flagella-associated protein 141 from Mus musculus (Mouse).